The primary structure comprises 376 residues: MLASYASDPLKSRGRLYKEIPNTYRNEFERDRDRIIHTNAFRRLQYKTQVFINHEGDHYRNRLTHSLEVSAVARSVANTLNLSSDLAETIALAHDLGHTPFGHAGERALNACMRDYNGFSHNAQSLKILTLLEKRYAAYNGVNLTWEVLEGIVKHNGPITCEINEYIAEYNKQNDLELDTYASAEAQIAALADDISYISHDLEDSIGAKIIDFNSLAELKYIDQYVFALKSKFKNISSSCLIYEVVRKLMHELITDLLWQTKENLNKEKITDIDEIRNLNYQLVDFTANTNERIKETKKFLHERVYKSNKITAISLKCTKIVQGLFKVYMDDINLLPVNWKMLIDSNEIYSKARVIADYIAGMTDRFAIQAYNQLC.

Residues 62-198 (RLTHSLEVSA…AALADDISYI (137 aa)) enclose the HD domain.

It belongs to the dGTPase family. Type 2 subfamily.

The chain is Deoxyguanosinetriphosphate triphosphohydrolase-like protein from Rickettsia canadensis (strain McKiel).